Reading from the N-terminus, the 449-residue chain is Serine--tRNA ligase (449 aa).

256 to 258 (TSE) serves as a coordination point for L-serine. Residue 287-289 (RAE) coordinates ATP. L-serine is bound at residue Glu-310. Residue 374 to 377 (EISS) participates in ATP binding. Ser-410 is an L-serine binding site.

This sequence belongs to the class-II aminoacyl-tRNA synthetase family. Type-1 seryl-tRNA synthetase subfamily. As to quaternary structure, homodimer. The tRNA molecule binds across the dimer.

The protein resides in the cytoplasm. It carries out the reaction tRNA(Ser) + L-serine + ATP = L-seryl-tRNA(Ser) + AMP + diphosphate + H(+). The catalysed reaction is tRNA(Sec) + L-serine + ATP = L-seryl-tRNA(Sec) + AMP + diphosphate + H(+). It participates in aminoacyl-tRNA biosynthesis; selenocysteinyl-tRNA(Sec) biosynthesis; L-seryl-tRNA(Sec) from L-serine and tRNA(Sec): step 1/1. Its function is as follows. Catalyzes the attachment of serine to tRNA(Ser). Is also able to aminoacylate tRNA(Sec) with serine, to form the misacylated tRNA L-seryl-tRNA(Sec), which will be further converted into selenocysteinyl-tRNA(Sec). In Xanthomonas oryzae pv. oryzae (strain MAFF 311018), this protein is Serine--tRNA ligase.